The sequence spans 510 residues: NAD(P)H-quinone oxidoreductase subunit 2, chloroplastic (510 aa).

13 helical membrane-spanning segments follow: residues 28–48 (DGSF…LLII), 57–77 (IPWL…TLLF), 99–119 (IFQF…VEYI), 124–144 (MALT…MFLC), 149–169 (LITI…LSGY), 183–203 (YLLM…WLYG), 227–247 (PGIS…LSPA), 295–315 (WHLL…LIAI), 323–343 (MLAY…IVGD), 354–374 (YMLF…LFGL), 395–415 (ALSL…AGFF), 418–438 (LYLF…IGLL), and 484–504 (MIVC…IIAI).

The protein belongs to the complex I subunit 2 family. In terms of assembly, NDH is composed of at least 16 different subunits, 5 of which are encoded in the nucleus.

The protein localises to the plastid. It localises to the chloroplast thylakoid membrane. The enzyme catalyses a plastoquinone + NADH + (n+1) H(+)(in) = a plastoquinol + NAD(+) + n H(+)(out). It carries out the reaction a plastoquinone + NADPH + (n+1) H(+)(in) = a plastoquinol + NADP(+) + n H(+)(out). Functionally, NDH shuttles electrons from NAD(P)H:plastoquinone, via FMN and iron-sulfur (Fe-S) centers, to quinones in the photosynthetic chain and possibly in a chloroplast respiratory chain. The immediate electron acceptor for the enzyme in this species is believed to be plastoquinone. Couples the redox reaction to proton translocation, and thus conserves the redox energy in a proton gradient. The sequence is that of NAD(P)H-quinone oxidoreductase subunit 2, chloroplastic from Silene latifolia (White campion).